We begin with the raw amino-acid sequence, 168 residues long: INO80 complex subunit 3 (168 aa).

Positions Thr-115–Leu-129 are enriched in polar residues. The segment at Thr-115–Lys-168 is disordered. Positions Gln-130 to Ser-148 are enriched in low complexity. The segment covering Thr-156–Lys-168 has biased composition (basic and acidic residues).

As to quaternary structure, component of the INO80 chromatin remodeling complex.

It is found in the nucleus. In terms of biological role, component of the INO80 complex which remodels chromatin by shifting nucleosomes and is involved in DNA repair. This is INO80 complex subunit 3 (iec3) from Schizosaccharomyces pombe (strain 972 / ATCC 24843) (Fission yeast).